The chain runs to 235 residues: Peptidase E (235 aa).

Active-site charge relay system residues include S122, D137, and H159.

It belongs to the peptidase S51 family.

The protein localises to the cytoplasm. The enzyme catalyses Dipeptidase E catalyzes the hydrolysis of dipeptides Asp-|-Xaa. It does not act on peptides with N-terminal Glu, Asn or Gln, nor does it cleave isoaspartyl peptides.. In terms of biological role, hydrolyzes dipeptides containing N-terminal aspartate residues. May play a role in allowing the cell to use peptide aspartate to spare carbon otherwise required for the synthesis of the aspartate family of amino acids. This Shewanella denitrificans (strain OS217 / ATCC BAA-1090 / DSM 15013) protein is Peptidase E.